We begin with the raw amino-acid sequence, 219 residues long: Isovaleryl-homoserine lactone synthase (219 aa).

It belongs to the autoinducer synthase family.

It carries out the reaction 3-methylbutanoyl-CoA + S-adenosyl-L-methionine = N-isovaleryl-L-homoserine lactone + S-methyl-5'-thioadenosine + CoA + H(+). Catalyzes the synthesis of IV-HSL (isovaleryl-homoserine lactone), a quorum-sensing (QS) autoinducer molecule which binds to BjaR1 transcriptional regulator to activate expression of QS-dependent genes. Is active with isovaleryl-CoA but cannot use isovaleryl-ACP as acyl donor. This chain is Isovaleryl-homoserine lactone synthase (bjaI), found in Bradyrhizobium diazoefficiens (strain JCM 10833 / BCRC 13528 / IAM 13628 / NBRC 14792 / USDA 110).